The primary structure comprises 280 residues: Probable N-acetyltransferase 14 (280 aa).

The next 2 membrane-spanning stretches (helical) occupy residues 37–57 and 60–80; these read LILH…LSSI and CVLH…VIYL. Positions 111-152 are disordered; the sequence is PDLPNPHLGRAKLTTNQEKTRRRKKAKEKEKMNESEQVDEDE. An N-acetyltransferase domain is found at 116–273; it reads PHLGRAKLTT…EKGWLGYPLT (158 aa).

It belongs to the camello family.

Its subcellular location is the membrane. Functionally, probable acetyltransferase. The protein is Probable N-acetyltransferase 14 (nat14) of Danio rerio (Zebrafish).